Consider the following 227-residue polypeptide: Prolactin-4A1 (227 aa).

Positions 1 to 31 (MHLSLTPQWSSWTVLLLLVSNLLLWENTASA) are cleaved as a signal peptide. 2 cysteine pairs are disulfide-bonded: Cys-87–Cys-203 and Cys-220–Cys-227. A glycan (N-linked (GlcNAc...) asparagine) is linked at Asn-175.

Belongs to the somatotropin/prolactin family. Expressed specifically in placenta. Expressed in both trophoblast giant cells and spongiotrophoblast cells.

The protein localises to the secreted. The polypeptide is Prolactin-4A1 (Prl4a1) (Mus musculus (Mouse)).